Consider the following 408-residue polypeptide: FAD-dependent monooxygenase nscC (408 aa).

Residues 1–20 form the signal peptide; sequence MAPPLPILIIGAGISGLTTA. Residues Glu-34 and Ala-45 each coordinate FAD. Residues Asn-91 and Asn-103 are each glycosylated (N-linked (GlcNAc...) asparagine). Arg-119 provides a ligand contact to FAD. 2 N-linked (GlcNAc...) asparagine glycosylation sites follow: Asn-170 and Asn-231. FAD is bound by residues Asp-328 and Gly-341.

This sequence belongs to the paxM FAD-dependent monooxygenase family. The cofactor is FAD.

Its pathway is secondary metabolite biosynthesis. FAD-dependent monooxygenase; part of the gene cluster that mediates the biosynthesis of neosartoricin, a prenylated anthracenone that exhibits T-cell antiproliferative activity, suggestive of a physiological role as an immunosuppressive agent. The non-reducing polyketide synthase nscA probably synthesizes and cyclizes the decaketide backbone. The hydrolase nscB then mediates the product release through hydrolysis followed by spontaneous decarboxylation. The prenyltransferase nscD catalyzes the addition of the dimethylallyl group to the aromatic C5. The FAD-dependent monooxygenase nscC is then responsible for the stereospecific hydroxylation at C2. There is no gene encoding O-acetyltransferase in the nsc gene cluster; thus, the last step of 2-O-acetylation leading to neosartoricin may be catalyzed by an unidentified O-acetyltransferase. This chain is FAD-dependent monooxygenase nscC, found in Neosartorya fischeri (strain ATCC 1020 / DSM 3700 / CBS 544.65 / FGSC A1164 / JCM 1740 / NRRL 181 / WB 181) (Aspergillus fischerianus).